A 314-amino-acid polypeptide reads, in one-letter code: Malate dehydrogenase (314 aa).

Residues 11-16 (GSGNIG) and Asp-35 contribute to the NAD(+) site. Residues Arg-84 and Arg-90 each coordinate substrate. Residues Asn-97 and 120-122 (ITN) each bind NAD(+). Positions 122 and 153 each coordinate substrate. Catalysis depends on His-177, which acts as the Proton acceptor.

This sequence belongs to the LDH/MDH superfamily. MDH type 3 family.

It catalyses the reaction (S)-malate + NAD(+) = oxaloacetate + NADH + H(+). Functionally, catalyzes the reversible oxidation of malate to oxaloacetate. The chain is Malate dehydrogenase from Rickettsia rickettsii (strain Iowa).